The chain runs to 191 residues: Cytochrome c oxidase subunit 6b-1 (191 aa).

Residues 1–14 show a composition bias toward polar residues; the sequence is MADAVNAQTPSLSE. The tract at residues 1–126 is disordered; it reads MADAVNAQTP…IKLETAPADF (126 aa). N-acetylalanine is present on A2. Composition is skewed to basic and acidic residues over residues 16-37 and 45-56; these read YHLE…KEVA and EEVKTEQAKEES. The segment covering 72–98 has biased composition (low complexity); that stretch reads APESTEVASEAPAAAEDNAEETPAAAE. The span at 99–114 shows a compositional bias: acidic residues; that stretch reads ENNDENASEEVAEETP. Positions 134-177 constitute a CHCH domain; the sequence is TRHCFTRYVEYHRCVAAKGDDAPECDKFAKFYRSLCPSEWVDRW. The Cx9C motif motif lies at 137-147; the sequence is CFTRYVEYHRC. Disulfide bonds link C137-C169 and C147-C158. Residues 158–169 carry the Cx10C motif motif; sequence CDKFAKFYRSLC.

The protein belongs to the cytochrome c oxidase subunit 6B (TC 3.D.4.8) family. As to expression, expressed in the whole plant.

The protein resides in the mitochondrion. In terms of biological role, this protein is one of the nuclear-coded polypeptide chains of cytochrome c oxidase, the terminal oxidase in mitochondrial electron transport. This protein may be one of the heme-binding subunits of the oxidase. This is Cytochrome c oxidase subunit 6b-1 (COX6B-1) from Arabidopsis thaliana (Mouse-ear cress).